We begin with the raw amino-acid sequence, 407 residues long: Na(+)-translocating NADH-quinone reductase subunit F (407 aa).

Residues I3 to F23 traverse the membrane as a helical segment. The region spanning G32–I126 is the 2Fe-2S ferredoxin-type domain. 4 residues coordinate [2Fe-2S] cluster: C69, C75, C78, and C110. The FAD-binding FR-type domain maps to V129 to K269.

It belongs to the NqrF family. Composed of six subunits; NqrA, NqrB, NqrC, NqrD, NqrE and NqrF. The cofactor is [2Fe-2S] cluster. Requires FAD as cofactor.

It localises to the cell inner membrane. It catalyses the reaction a ubiquinone + n Na(+)(in) + NADH + H(+) = a ubiquinol + n Na(+)(out) + NAD(+). Its function is as follows. NQR complex catalyzes the reduction of ubiquinone-1 to ubiquinol by two successive reactions, coupled with the transport of Na(+) ions from the cytoplasm to the periplasm. The first step is catalyzed by NqrF, which accepts electrons from NADH and reduces ubiquinone-1 to ubisemiquinone by a one-electron transfer pathway. This chain is Na(+)-translocating NADH-quinone reductase subunit F, found in Yersinia pseudotuberculosis serotype I (strain IP32953).